The primary structure comprises 495 residues: Cobyric acid synthase (495 aa).

The 189-residue stretch at 252 to 440 (RPKVVVLAYP…VHGLFADDGL (189 aa)) folds into the GATase cobBQ-type domain. C334 serves as the catalytic Nucleophile. H432 is an active-site residue.

The protein belongs to the CobB/CobQ family. CobQ subfamily.

It participates in cofactor biosynthesis; adenosylcobalamin biosynthesis. Functionally, catalyzes amidations at positions B, D, E, and G on adenosylcobyrinic A,C-diamide. NH(2) groups are provided by glutamine, and one molecule of ATP is hydrogenolyzed for each amidation. The chain is Cobyric acid synthase from Bradyrhizobium sp. (strain ORS 278).